A 322-amino-acid chain; its full sequence is Ribonucleoside-diphosphate reductase subunit beta nrdF1 (322 aa).

Fe cation-binding residues include Asp-70, Glu-101, and His-104. Tyr-108 is an active-site residue. Positions 161, 195, and 198 each coordinate Fe cation.

It belongs to the ribonucleoside diphosphate reductase small chain family. In terms of assembly, tetramer of two alpha and two beta subunits. Fe cation serves as cofactor.

The enzyme catalyses a 2'-deoxyribonucleoside 5'-diphosphate + [thioredoxin]-disulfide + H2O = a ribonucleoside 5'-diphosphate + [thioredoxin]-dithiol. In terms of biological role, provides the precursors necessary for DNA synthesis. Catalyzes the biosynthesis of deoxyribonucleotides from the corresponding ribonucleotides. The chain is Ribonucleoside-diphosphate reductase subunit beta nrdF1 (nrdF1) from Mycobacterium tuberculosis (strain CDC 1551 / Oshkosh).